Here is a 78-residue protein sequence, read N- to C-terminus: Large ribosomal subunit protein bL28 (78 aa).

It belongs to the bacterial ribosomal protein bL28 family.

The protein is Large ribosomal subunit protein bL28 of Psychrobacter arcticus (strain DSM 17307 / VKM B-2377 / 273-4).